The following is a 964-amino-acid chain: Translation initiation factor IF-2 (964 aa).

Residues 35-353 (ASSTIEPPVV…RQKRNEYESM (319 aa)) form a disordered region. Residues 64–108 (KPTPAKPAAKPGAPAPKPGTAQKPTAPTPGAVAAPKPGTAAAKPT) show a composition bias toward low complexity. Over residues 124–133 (PAKPTAPKPA) the composition is skewed to pro residues. The span at 145–155 (AAKKAAEDKAT) shows a compositional bias: basic and acidic residues. Residues 166-178 (NAMPRPMAKPGPK) are compositionally biased toward pro residues. The segment covering 220-233 (PRPQGGQRSGAPRD) has biased composition (low complexity). Composition is skewed to gly residues over residues 234 to 252 (GQGGPRGQRPGPGSGGPRP) and 290 to 333 (GKGG…GRPG). Residues 337–346 (RRGRKSKRQK) are compositionally biased toward basic residues. Residues 459–631 (KRPPVVTVMG…VCLTADAELD (173 aa)) enclose the tr-type G domain. The segment at 468-475 (GHVDHGKT) is G1. 468-475 (GHVDHGKT) contacts GTP. Positions 493-497 (GITQG) are G2. The G3 stretch occupies residues 518-521 (DTPG). Residues 518 to 522 (DTPGH) and 572 to 575 (NKID) contribute to the GTP site. A G4 region spans residues 572-575 (NKID). The interval 608–610 (SAK) is G5.

Belongs to the TRAFAC class translation factor GTPase superfamily. Classic translation factor GTPase family. IF-2 subfamily.

Its subcellular location is the cytoplasm. In terms of biological role, one of the essential components for the initiation of protein synthesis. Protects formylmethionyl-tRNA from spontaneous hydrolysis and promotes its binding to the 30S ribosomal subunits. Also involved in the hydrolysis of GTP during the formation of the 70S ribosomal complex. The polypeptide is Translation initiation factor IF-2 (Corynebacterium efficiens (strain DSM 44549 / YS-314 / AJ 12310 / JCM 11189 / NBRC 100395)).